A 317-amino-acid chain; its full sequence is Polysulfide reductase chain C (317 aa).

8 helical membrane passes run 20-40 (IAVY…AIII), 54-75 (IIKA…LLIF), 98-118 (LGVL…LGVF), 147-167 (IVTF…LSAM), 182-202 (FLAS…LLFF), 221-237 (VILF…VGMY), 259-279 (LFWL…NVAL), and 289-309 (FVML…FYIL).

It belongs to the NrfD family. As to quaternary structure, functional polysulfide reductase is made up of three different (A, B, and C) subunits.

Its subcellular location is the cell inner membrane. Could possibly serve as the membrane anchor of the enzyme. In terms of biological role, component of the phosphorylative electron transport system with polysulfide as the terminal acceptor. This Wolinella succinogenes (strain ATCC 29543 / DSM 1740 / CCUG 13145 / JCM 31913 / LMG 7466 / NCTC 11488 / FDC 602W) (Vibrio succinogenes) protein is Polysulfide reductase chain C (psrC).